A 249-amino-acid chain; its full sequence is Suppressor of silencing P0 (249 aa).

The region spanning 63–67 (LPFHL) is the F-box-like domain.

This sequence belongs to the polerovirus P0 protein family. Interacts (via F-box-like domain) with host AGO1; this interaction targets AGO1 for degradation, and thereby suppresses the silencing function of the latter. Interacts (via F-box-like domain) with host ASK1 and ASK2 (SKP proteins); these interactions are essential for viral pathogenicity. Part of a SCF P0 complex composed of P0 and the host proteins SKP and CUL1.

Suppressor of RNA-mediated gene silencing, also known as post-transcriptional gene silencing (PTGS), a mechanism of plant viral defense that limits the accumulation of viral RNAs. The P0 protein suppresses local PTGS using its F-box-like domain to mediate destabilization and degradation of the AGO1 protein. The protein is Suppressor of silencing P0 of Turnip yellows virus (isolate FL-1) (TuYV).